We begin with the raw amino-acid sequence, 135 residues long: Large ribosomal subunit protein eL27z (135 aa).

The protein belongs to the eukaryotic ribosomal protein eL27 family.

The protein is Large ribosomal subunit protein eL27z (RPL27A) of Arabidopsis thaliana (Mouse-ear cress).